A 282-amino-acid polypeptide reads, in one-letter code: Endo-1,4-beta-xylanase B (282 aa).

An N-terminal signal peptide occupies residues methionine 1–arginine 39. Asparagine 33 is a glycosylation site (N-linked (GlcNAc...) asparagine). One can recognise a GH11 domain in the interval alanine 40–serine 219. The Nucleophile role is filled by glutamate 117. Residue glutamate 206 is the Proton donor of the active site. Residues glycine 214–glycine 245 form a disordered region. The span at threonine 227–serine 243 shows a compositional bias: low complexity. The CBM1 domain maps to threonine 246–glutamine 282.

Belongs to the glycosyl hydrolase 11 (cellulase G) family.

Its subcellular location is the secreted. It catalyses the reaction Endohydrolysis of (1-&gt;4)-beta-D-xylosidic linkages in xylans.. Its pathway is glycan degradation; xylan degradation. Its activity is regulated as follows. Significantly inhibited by the wheat xylanase inhibiting protein I (XIP-I) and the proteinaceous endoxylanase Triticum aestivum xylanase inhibitors I (TAXI-I), but not TAXI-II. Endo-1,4-beta-xylanase involved in the hydrolysis of xylan, a major structural heterogeneous polysaccharide found in plant biomass representing the second most abundant polysaccharide in the biosphere, after cellulose. The polypeptide is Endo-1,4-beta-xylanase B (xynB) (Talaromyces funiculosus (Fruitlet core rot fungus)).